A 364-amino-acid polypeptide reads, in one-letter code: Ribosomal RNA large subunit methyltransferase M (364 aa).

S-adenosyl-L-methionine contacts are provided by residues Ser198, Ala231 to Gly234, Asp250, Asp270, and Asp286. Lys315 serves as the catalytic Proton acceptor.

The protein belongs to the class I-like SAM-binding methyltransferase superfamily. RNA methyltransferase RlmE family. RlmM subfamily. In terms of assembly, monomer.

It is found in the cytoplasm. It carries out the reaction cytidine(2498) in 23S rRNA + S-adenosyl-L-methionine = 2'-O-methylcytidine(2498) in 23S rRNA + S-adenosyl-L-homocysteine + H(+). Functionally, catalyzes the 2'-O-methylation at nucleotide C2498 in 23S rRNA. In Azoarcus sp. (strain BH72), this protein is Ribosomal RNA large subunit methyltransferase M.